Consider the following 201-residue polypeptide: Small ribosomal subunit protein eS1 (201 aa).

The protein belongs to the eukaryotic ribosomal protein eS1 family.

The sequence is that of Small ribosomal subunit protein eS1 from Methanoregula boonei (strain DSM 21154 / JCM 14090 / 6A8).